The following is a 489-amino-acid chain: Palmitoyltransferase ZDHHC14 (489 aa).

At 1–60 (MPPGGGGPMKDCEYSQISTHSSSPMESPHKKKKIAARRKWEVFPGRNKFFCNGRIMMARQ) the chain is on the cytoplasmic side. The helical transmembrane segment at 61–81 (TGVFYLTLILILVTSGLFFAF) threads the bilayer. The Lumenal portion of the chain corresponds to 82-89 (DCRYLAEK). Residues 90-110 (ITPAIPVVGGILFFFVMGTLL) traverse the membrane as a helical segment. Over 111–208 (RTSFSDPGVL…GNCVGKRNYR (98 aa)) the chain is Cytoplasmic. Residues 165 to 215 (KYCFTCKIFRPPRASHCSLCDNCVEQFDHHCPWVGNCVGKRNYRFFYMFIL) enclose the DHHC domain. Cys195 serves as the catalytic S-palmitoyl cysteine intermediate. Residues 209–229 (FFYMFILSLSFLTVFIFAFVI) traverse the membrane as a helical segment. Residues 230–255 (THVIHRSQQKGFLDALKDSPASVLEA) lie on the Lumenal side of the membrane. A helical membrane pass occupies residues 256 to 276 (VICFFSVWSIIGLSGFHTYLI). Residues 277–489 (SSNQTTNEDI…VRGLVKLSSV (213 aa)) are Cytoplasmic-facing. The tract at residues 434–454 (HGGHQFLTPDEAPSPPRMLGA) is disordered. Position 456 is a phosphoserine (Ser456).

It belongs to the DHHC palmitoyltransferase family. ERF2/ZDHHC9 subfamily.

Its subcellular location is the endoplasmic reticulum membrane. The protein resides in the golgi apparatus membrane. The catalysed reaction is L-cysteinyl-[protein] + hexadecanoyl-CoA = S-hexadecanoyl-L-cysteinyl-[protein] + CoA. Its function is as follows. Palmitoyltransferase that could catalyze the addition of palmitate onto various protein substrates. May have a palmitoyltransferase activity toward the beta-2 adrenergic receptor/ADRB2 and thereby regulate G protein-coupled receptor signaling. May play a role in cell differentiation and apoptosis. The chain is Palmitoyltransferase ZDHHC14 from Mus musculus (Mouse).